The following is a 775-amino-acid chain: GRIP and coiled-coil domain-containing protein 1 (775 aa).

A coiled-coil region spans residues 13 to 61 (SKKDLLETIETQKKQLLQYQARLKDVVRAYKSLLKEKEALEASIKVLSV). Basic and acidic residues predominate over residues 84-93 (DDRCSTHSED). 2 disordered regions span residues 84-153 (DDRC…AGGE) and 614-639 (GLPG…SDSL). Composition is skewed to low complexity over residues 94–110 (STGT…LTST), 133–147 (ASWS…SGDG), and 629–638 (DPADTSSSDS). Positions 153-763 (EVDKRLHQLK…PEEKQVIMRL (611 aa)) form a coiled coil. One can recognise a GRIP domain in the interval 713–763 (QSREGANLEYLKNIIYRFLTLPDSLGRQQTLTAILTILHFSPEEKQVIMRL).

Its subcellular location is the cytoplasm. It is found in the golgi apparatus membrane. Its function is as follows. Probably involved in maintaining Golgi structure. This Homo sapiens (Human) protein is GRIP and coiled-coil domain-containing protein 1 (GCC1).